An 84-amino-acid chain; its full sequence is Small ribosomal subunit protein uS17 (84 aa).

Belongs to the universal ribosomal protein uS17 family. Part of the 30S ribosomal subunit.

Functionally, one of the primary rRNA binding proteins, it binds specifically to the 5'-end of 16S ribosomal RNA. The polypeptide is Small ribosomal subunit protein uS17 (Aliivibrio salmonicida (strain LFI1238) (Vibrio salmonicida (strain LFI1238))).